Reading from the N-terminus, the 122-residue chain is UPF0145 protein BceJ2315_57450 (122 aa).

Belongs to the UPF0145 family.

The polypeptide is UPF0145 protein BceJ2315_57450 (Burkholderia cenocepacia (strain ATCC BAA-245 / DSM 16553 / LMG 16656 / NCTC 13227 / J2315 / CF5610) (Burkholderia cepacia (strain J2315))).